The primary structure comprises 116 residues: Large ribosomal subunit protein uL18 (116 aa).

This sequence belongs to the universal ribosomal protein uL18 family. As to quaternary structure, part of the 50S ribosomal subunit; part of the 5S rRNA/L5/L18/L25 subcomplex. Contacts the 5S and 23S rRNAs.

Its function is as follows. This is one of the proteins that bind and probably mediate the attachment of the 5S RNA into the large ribosomal subunit, where it forms part of the central protuberance. The polypeptide is Large ribosomal subunit protein uL18 (Shewanella frigidimarina (strain NCIMB 400)).